Consider the following 340-residue polypeptide: Thylakoidal processing peptidase 1, chloroplastic (340 aa).

The transit peptide at 1–52 directs the protein to the chloroplast; it reads MAIRITFTYSTHVARNLVGTRVGPGGYCFESLVRPRFFSHKRDFDRSPRNRP. A helical membrane pass occupies residues 155-175; it reads EDAKAAFTAVTVSILFRSALA. Topologically, residues 176-340 are lumenal, thylakoid; the sequence is EPKSIPSTSM…AITRGPVAVS (165 aa). S184 is a catalytic residue.

The protein belongs to the peptidase S26 family.

The protein localises to the plastid. The protein resides in the chloroplast thylakoid membrane. It carries out the reaction Cleavage of hydrophobic, N-terminal signal or leader sequences from secreted and periplasmic proteins.. In terms of biological role, cleaves the thylakoid-transfer domain from a chloroplast protein. This is Thylakoidal processing peptidase 1, chloroplastic (TPP1) from Arabidopsis thaliana (Mouse-ear cress).